Reading from the N-terminus, the 270-residue chain is Phosphonoacetaldehyde hydrolase (270 aa).

Asp11 (nucleophile) is an active-site residue. Mg(2+)-binding residues include Asp11 and Ala13. The active-site Schiff-base intermediate with substrate is the Lys53. Asp187 contacts Mg(2+).

Belongs to the HAD-like hydrolase superfamily. PhnX family. As to quaternary structure, homodimer. It depends on Mg(2+) as a cofactor.

The catalysed reaction is phosphonoacetaldehyde + H2O = acetaldehyde + phosphate + H(+). Functionally, involved in phosphonate degradation. The polypeptide is Phosphonoacetaldehyde hydrolase (Salmonella gallinarum (strain 287/91 / NCTC 13346)).